Consider the following 255-residue polypeptide: Hydroxyacylglutathione hydrolase (255 aa).

Residues H56, H58, D60, H61, H114, D133, and H171 each coordinate Zn(2+).

The protein belongs to the metallo-beta-lactamase superfamily. Glyoxalase II family. Monomer. It depends on Zn(2+) as a cofactor.

It catalyses the reaction an S-(2-hydroxyacyl)glutathione + H2O = a 2-hydroxy carboxylate + glutathione + H(+). Its pathway is secondary metabolite metabolism; methylglyoxal degradation; (R)-lactate from methylglyoxal: step 2/2. Its function is as follows. Thiolesterase that catalyzes the hydrolysis of S-D-lactoyl-glutathione to form glutathione and D-lactic acid. The polypeptide is Hydroxyacylglutathione hydrolase (Cereibacter sphaeroides (strain ATCC 17025 / ATH 2.4.3) (Rhodobacter sphaeroides)).